Reading from the N-terminus, the 318-residue chain is Pheromone-regulated membrane protein 5 (318 aa).

The chain crosses the membrane as a helical span at residues 78–98 (FIXVGGIAGVIFLAILLWWVI). The residue at position 129 (Ser-129) is a Phosphoserine. Positions 238–247 (TISSSSASSL) are enriched in low complexity. Residues 238 to 318 (TISSSSASSL…HMLEGKEQDE (81 aa)) form a disordered region. A compositionally biased stretch (basic and acidic residues) spans 250 to 261 (GNEKEVGEDIRK). Polar residues predominate over residues 276 to 285 (SPESDGSVNR). Phosphoserine is present on residues Ser-279, Ser-282, and Ser-288. Basic and acidic residues predominate over residues 309-318 (HMLEGKEQDE). Lys-314 is covalently cross-linked (Glycyl lysine isopeptide (Lys-Gly) (interchain with G-Cter in ubiquitin)).

This sequence belongs to the PRM5 family.

Its subcellular location is the membrane. This Saccharomyces cerevisiae (strain FostersO) (Baker's yeast) protein is Pheromone-regulated membrane protein 5 (PRM5).